Here is a 137-residue protein sequence, read N- to C-terminus: Small ribosomal subunit protein bS6 (137 aa).

Residues 96 to 137 (ITEASPMAKAKDERDTRRSSEERAPRAEAAEEVEESAENTAE) form a disordered region. The segment covering 104–124 (KAKDERDTRRSSEERAPRAEA) has biased composition (basic and acidic residues). The span at 125-137 (AEEVEESAENTAE) shows a compositional bias: acidic residues.

Belongs to the bacterial ribosomal protein bS6 family.

Its function is as follows. Binds together with bS18 to 16S ribosomal RNA. This Shewanella halifaxensis (strain HAW-EB4) protein is Small ribosomal subunit protein bS6.